A 91-amino-acid polypeptide reads, in one-letter code: Putative membrane protein insertion efficiency factor (91 aa).

A disordered region spans residues 66–91; it reads GGVDPVPSCGCHSDKETTPKEKSDNA. Basic and acidic residues predominate over residues 77-91; the sequence is HSDKETTPKEKSDNA.

It belongs to the UPF0161 family.

It localises to the cell inner membrane. In terms of biological role, could be involved in insertion of integral membrane proteins into the membrane. This Hydrogenovibrio crunogenus (strain DSM 25203 / XCL-2) (Thiomicrospira crunogena) protein is Putative membrane protein insertion efficiency factor.